A 657-amino-acid polypeptide reads, in one-letter code: N-acetylgalactosaminyltransferase 7 (657 aa).

At 1-6 (MRLKIG) the chain is on the cytoplasmic side. The chain crosses the membrane as a helical; Signal-anchor for type II membrane protein span at residues 7–29 (FILRSLLVVGSFLGLVVLWSSLT). The Lumenal segment spans residues 30 to 657 (PRPDDPSPLS…KWEMNNIHSV (628 aa)). A disordered region spans residues 31 to 66 (RPDDPSPLSRMREDRDVNDPMPNRGGNGLAPGEDRF). Intrachain disulfides connect cysteine 197/cysteine 435, cysteine 426/cysteine 507, cysteine 545/cysteine 562, cysteine 585/cysteine 600, and cysteine 625/cysteine 640. The interval 206-317 (LLTSSVVIVF…VNWYAPLVAP (112 aa)) is catalytic subdomain A. Positions 247 and 277 each coordinate substrate. Positions 301 and 303 each coordinate Mn(2+). The interval 381–443 (PYRSPAMAGG…PCSRVGHIYR (63 aa)) is catalytic subdomain B. Tryptophan 412 provides a ligand contact to substrate. Histidine 440 contacts Mn(2+). Arginine 443 lines the substrate pocket. Residues 532–652 (VDWGEIRGFE…SKTTQKWEMN (121 aa)) form the Ricin B-type lectin domain.

It belongs to the glycosyltransferase 2 family. GalNAc-T subfamily. Mn(2+) is required as a cofactor.

It is found in the golgi apparatus membrane. It carries out the reaction L-seryl-[protein] + UDP-N-acetyl-alpha-D-galactosamine = a 3-O-[N-acetyl-alpha-D-galactosaminyl]-L-seryl-[protein] + UDP + H(+). The enzyme catalyses L-threonyl-[protein] + UDP-N-acetyl-alpha-D-galactosamine = a 3-O-[N-acetyl-alpha-D-galactosaminyl]-L-threonyl-[protein] + UDP + H(+). Its pathway is protein modification; protein glycosylation. Functionally, glycopeptide transferase involved in O-linked oligosaccharide biosynthesis, which catalyzes the transfer of an N-acetyl-D-galactosamine residue to an already glycosylated peptide. In contrast to other proteins of the family, it does not act as a peptide transferase that transfers GalNAc onto serine or threonine residue on the protein receptor, but instead requires the prior addition of a GalNAc on a peptide before adding additional GalNAc moieties. Some peptide transferase activity is however not excluded, considering that its appropriate peptide substrate may remain unidentified. In Pongo abelii (Sumatran orangutan), this protein is N-acetylgalactosaminyltransferase 7 (GALNT7).